Consider the following 428-residue polypeptide: tRNA modification GTPase MnmE (428 aa).

Positions 20, 77, and 117 each coordinate (6S)-5-formyl-5,6,7,8-tetrahydrofolate. The region spanning 213 to 351 (GFEVAIVGSP…LVSRISDTLR (139 aa)) is the TrmE-type G domain. GTP-binding positions include 223 to 228 (NVGKST), 242 to 248 (SEYAGTT), and 267 to 270 (DTAG). Mg(2+) is bound by residues serine 227 and threonine 248. Lysine 428 is a binding site for (6S)-5-formyl-5,6,7,8-tetrahydrofolate.

It belongs to the TRAFAC class TrmE-Era-EngA-EngB-Septin-like GTPase superfamily. TrmE GTPase family. In terms of assembly, homodimer. Heterotetramer of two MnmE and two MnmG subunits. K(+) serves as cofactor.

The protein resides in the cytoplasm. In terms of biological role, exhibits a very high intrinsic GTPase hydrolysis rate. Involved in the addition of a carboxymethylaminomethyl (cmnm) group at the wobble position (U34) of certain tRNAs, forming tRNA-cmnm(5)s(2)U34. The protein is tRNA modification GTPase MnmE of Ruegeria sp. (strain TM1040) (Silicibacter sp.).